The sequence spans 127 residues: Protein ApaG (127 aa).

In terms of domain architecture, ApaG spans 3–127; it reads NERKYSIKVE…FILSVPRVLH (125 aa).

The sequence is that of Protein ApaG from Nitrosomonas europaea (strain ATCC 19718 / CIP 103999 / KCTC 2705 / NBRC 14298).